We begin with the raw amino-acid sequence, 143 residues long: Small ribosomal subunit protein eS6 (143 aa).

This sequence belongs to the eukaryotic ribosomal protein eS6 family.

This chain is Small ribosomal subunit protein eS6, found in Methanoregula boonei (strain DSM 21154 / JCM 14090 / 6A8).